The following is a 143-amino-acid chain: Large ribosomal subunit protein uL11 (143 aa).

It belongs to the universal ribosomal protein uL11 family. Part of the ribosomal stalk of the 50S ribosomal subunit. Interacts with L10 and the large rRNA to form the base of the stalk. L10 forms an elongated spine to which L12 dimers bind in a sequential fashion forming a multimeric L10(L12)X complex. Post-translationally, one or more lysine residues are methylated.

In terms of biological role, forms part of the ribosomal stalk which helps the ribosome interact with GTP-bound translation factors. The protein is Large ribosomal subunit protein uL11 of Halorhodospira halophila (strain DSM 244 / SL1) (Ectothiorhodospira halophila (strain DSM 244 / SL1)).